The following is a 65-amino-acid chain: Conotoxin Cal1.5 (65 aa).

The signal sequence occupies residues 1–18 (MRCLPVFIILLLLASTAA). Residues 19–49 (VDVAGSKLKRRLERKPYQGSQAYVKKTAFGL) constitute a propeptide that is removed on maturation. Disulfide bonds link cysteine 52–cysteine 62 and cysteine 53–cysteine 59. A 4-hydroxyproline modification is found at proline 61.

The protein belongs to the conotoxin T superfamily. As to expression, expressed by the venom duct.

It localises to the secreted. Functionally, probable neurotoxin with unknown target. Possibly targets ion channels. The protein is Conotoxin Cal1.5 of Californiconus californicus (California cone).